A 508-amino-acid chain; its full sequence is Photosystem II CP47 reaction center protein (508 aa).

Transmembrane regions (helical) follow at residues 21–36 (AVHI…WAGS), 101–115 (IVFS…IWHW), 140–156 (GIHL…FGAF), 203–218 (IAAG…FHLS), 237–252 (VLSS…AFVV), and 457–472 (SFAL…HGAR).

It belongs to the PsbB/PsbC family. PsbB subfamily. PSII is composed of 1 copy each of membrane proteins PsbA, PsbB, PsbC, PsbD, PsbE, PsbF, PsbH, PsbI, PsbJ, PsbK, PsbL, PsbM, PsbT, PsbX, PsbY, PsbZ, Psb30/Ycf12, at least 3 peripheral proteins of the oxygen-evolving complex and a large number of cofactors. It forms dimeric complexes. Requires Binds multiple chlorophylls. PSII binds additional chlorophylls, carotenoids and specific lipids. as cofactor.

The protein resides in the plastid. It localises to the chloroplast thylakoid membrane. One of the components of the core complex of photosystem II (PSII). It binds chlorophyll and helps catalyze the primary light-induced photochemical processes of PSII. PSII is a light-driven water:plastoquinone oxidoreductase, using light energy to abstract electrons from H(2)O, generating O(2) and a proton gradient subsequently used for ATP formation. In Trachelium caeruleum (Blue throatwort), this protein is Photosystem II CP47 reaction center protein.